The primary structure comprises 239 residues: uncharacterized protein (239 aa).

Its subcellular location is the endoplasmic reticulum. It localises to the golgi apparatus. This is an uncharacterized protein from Schizosaccharomyces pombe (strain 972 / ATCC 24843) (Fission yeast).